We begin with the raw amino-acid sequence, 508 residues long: UDP-N-acetylmuramoylalanine--D-glutamate ligase (508 aa).

An ATP-binding site is contributed by 138-144 (GTNGKTT).

The protein belongs to the MurCDEF family.

The protein localises to the cytoplasm. It carries out the reaction UDP-N-acetyl-alpha-D-muramoyl-L-alanine + D-glutamate + ATP = UDP-N-acetyl-alpha-D-muramoyl-L-alanyl-D-glutamate + ADP + phosphate + H(+). Its pathway is cell wall biogenesis; peptidoglycan biosynthesis. Its function is as follows. Cell wall formation. Catalyzes the addition of glutamate to the nucleotide precursor UDP-N-acetylmuramoyl-L-alanine (UMA). In Bordetella avium (strain 197N), this protein is UDP-N-acetylmuramoylalanine--D-glutamate ligase.